The primary structure comprises 447 residues: UDP-N-acetylmuramoylalanine--D-glutamate ligase (447 aa).

112–118 (GTNGKST) is an ATP binding site.

This sequence belongs to the MurCDEF family.

It is found in the cytoplasm. The catalysed reaction is UDP-N-acetyl-alpha-D-muramoyl-L-alanine + D-glutamate + ATP = UDP-N-acetyl-alpha-D-muramoyl-L-alanyl-D-glutamate + ADP + phosphate + H(+). It participates in cell wall biogenesis; peptidoglycan biosynthesis. Its function is as follows. Cell wall formation. Catalyzes the addition of glutamate to the nucleotide precursor UDP-N-acetylmuramoyl-L-alanine (UMA). The sequence is that of UDP-N-acetylmuramoylalanine--D-glutamate ligase from Legionella pneumophila (strain Paris).